The following is a 436-amino-acid chain: Histidinol dehydrogenase (436 aa).

Residues Tyr136, Gln198, and Asn221 each coordinate NAD(+). Substrate is bound by residues Ser244, Gln266, and His269. Zn(2+)-binding residues include Gln266 and His269. Catalysis depends on proton acceptor residues Glu334 and His335. Substrate-binding residues include His335, Asp368, Glu422, and His427. Zn(2+) is bound at residue Asp368. Residue His427 participates in Zn(2+) binding.

This sequence belongs to the histidinol dehydrogenase family. Zn(2+) is required as a cofactor.

The enzyme catalyses L-histidinol + 2 NAD(+) + H2O = L-histidine + 2 NADH + 3 H(+). The protein operates within amino-acid biosynthesis; L-histidine biosynthesis; L-histidine from 5-phospho-alpha-D-ribose 1-diphosphate: step 9/9. In terms of biological role, catalyzes the sequential NAD-dependent oxidations of L-histidinol to L-histidinaldehyde and then to L-histidine. In Dehalococcoides mccartyi (strain ATCC BAA-2266 / KCTC 15142 / 195) (Dehalococcoides ethenogenes (strain 195)), this protein is Histidinol dehydrogenase.